A 289-amino-acid chain; its full sequence is Somatostatin-like receptor F_48D10.1 (289 aa).

The Extracellular segment spans residues 1–57 (MEPLDQTPGFPLSPEPNYWYETTPSLLLVSYPHLLDISSNQSTQSVPFQGSSALLTA). Asn-40 is a glycosylation site (N-linked (GlcNAc...) asparagine). The helical transmembrane segment at 58 to 79 (VIYITVFVVGLTGNTLAIYVVL) threads the bilayer. Topologically, residues 80–89 (RYAGMKTVTN) are cytoplasmic. Residues 90–110 (IYILNLAVADELYIVGLPFLA) form a helical membrane-spanning segment. At 111–126 (TQNVLSYWPFGSFLCR) the chain is on the extracellular side. Cysteines 125 and 221 form a disulfide. A helical transmembrane segment spans residues 127 to 148 (VVMTADSMNQFTSIFCLTVMSI). The Cytoplasmic portion of the chain corresponds to 149 to 170 (DRYLAVVHPIRSTKWRHPRVAK). The chain crosses the membrane as a helical span at residues 171-191 (VVSAAVWAVSFVVVLPVVIFS). Residues 192-240 (DVQVRPSRPLQVGTSSKCLVKRVQETFNSCNMIWPEPKNVWSTAFILYT) lie on the Extracellular side of the membrane. The helical transmembrane segment at 241–261 (AMVGFFGPLLIICLCYLLIVI) threads the bilayer. Residues 262-289 (KVRHRMSAAQVGAVVSTCPLNICCLSRR) lie on the Cytoplasmic side of the membrane.

Belongs to the G-protein coupled receptor 1 family.

The protein localises to the cell membrane. The polypeptide is Somatostatin-like receptor F_48D10.1 (Takifugu rubripes (Japanese pufferfish)).